A 111-amino-acid polypeptide reads, in one-letter code: MEIEKTNRMNTLFEFYATLLTDKQMNYIELYYADDYSLAEIAEEFNISRQAVYDNIKRTEKVLESYEEKLHLFSNYVVRNQLLEELMKKYSTDQYLITKLQEIQQIDEEEF.

Belongs to the UPF0122 family.

Its function is as follows. Might take part in the signal recognition particle (SRP) pathway. This is inferred from the conservation of its genetic proximity to ftsY/ffh. May be a regulatory protein. This chain is UPF0122 protein YofM (yofM), found in Lactococcus lactis subsp. lactis (strain IL1403) (Streptococcus lactis).